The primary structure comprises 100 residues: Large ribosomal subunit protein uL23 (100 aa).

It belongs to the universal ribosomal protein uL23 family. As to quaternary structure, part of the 50S ribosomal subunit. Contacts protein L29, and trigger factor when it is bound to the ribosome.

In terms of biological role, one of the early assembly proteins it binds 23S rRNA. One of the proteins that surrounds the polypeptide exit tunnel on the outside of the ribosome. Forms the main docking site for trigger factor binding to the ribosome. The protein is Large ribosomal subunit protein uL23 of Baumannia cicadellinicola subsp. Homalodisca coagulata.